A 122-amino-acid polypeptide reads, in one-letter code: U1 small nuclear ribonucleoprotein C (122 aa).

The Matrin-type zinc-finger motif lies at 4–36 (YFCDYCDTYLTHDSPSVRKTHCSGRKHKDNVKM).

Belongs to the U1 small nuclear ribonucleoprotein C family. As to quaternary structure, U1 snRNP is composed of the 7 core Sm proteins B/B', D1, D2, D3, E, F and G that assemble in a heptameric protein ring on the Sm site of the small nuclear RNA to form the core snRNP, and at least 3 U1 snRNP-specific proteins U1-70K, U1-A and U1-C. U1-C interacts with U1 snRNA and the 5' splice-site region of the pre-mRNA.

It is found in the nucleus. In terms of biological role, component of the spliceosomal U1 snRNP, which is essential for recognition of the pre-mRNA 5' splice-site and the subsequent assembly of the spliceosome. U1-C is directly involved in initial 5' splice-site recognition for both constitutive and regulated alternative splicing. The interaction with the 5' splice-site seems to precede base-pairing between the pre-mRNA and the U1 snRNA. Stimulates commitment or early (E) complex formation by stabilizing the base pairing of the 5' end of the U1 snRNA and the 5' splice-site region. This chain is U1 small nuclear ribonucleoprotein C, found in Ciona intestinalis (Transparent sea squirt).